We begin with the raw amino-acid sequence, 33 residues long: Photosystem II reaction center protein Psb30 (33 aa).

The chain crosses the membrane as a helical span at residues 8 to 28 (QLGSLLLITVAGPLIVFFLFI).

This sequence belongs to the Psb30/Ycf12 family. As to quaternary structure, PSII is composed of 1 copy each of membrane proteins PsbA, PsbB, PsbC, PsbD, PsbE, PsbF, PsbH, PsbI, PsbJ, PsbK, PsbL, PsbM, PsbT, PsbY, PsbZ, Psb30/Ycf12, peripheral proteins of the oxygen-evolving complex and a large number of cofactors. It forms dimeric complexes.

The protein resides in the plastid. It localises to the chloroplast thylakoid membrane. Its function is as follows. A core subunit of photosystem II (PSII), probably helps stabilize the reaction center. The polypeptide is Photosystem II reaction center protein Psb30 (Euglena anabaena (Euglenaria anabaena)).